A 232-amino-acid chain; its full sequence is Ribose-5-phosphate isomerase A (232 aa).

Substrate is bound by residues 31–34 (TGST), 87–90 (DGAD), and 100–103 (KGGG). Glutamate 109 serves as the catalytic Proton acceptor. Lysine 127 provides a ligand contact to substrate.

The protein belongs to the ribose 5-phosphate isomerase family. Homodimer.

The catalysed reaction is aldehydo-D-ribose 5-phosphate = D-ribulose 5-phosphate. Its pathway is carbohydrate degradation; pentose phosphate pathway; D-ribose 5-phosphate from D-ribulose 5-phosphate (non-oxidative stage): step 1/1. Functionally, catalyzes the reversible conversion of ribose-5-phosphate to ribulose 5-phosphate. The polypeptide is Ribose-5-phosphate isomerase A (Bifidobacterium longum subsp. infantis (strain ATCC 15697 / DSM 20088 / JCM 1222 / NCTC 11817 / S12)).